A 389-amino-acid polypeptide reads, in one-letter code: Large envelope protein (389 aa).

Position 1 is an N-acetylmethionine (Met1). Gly2 carries N-myristoyl glycine; by host lipidation. The tract at residues 2–108 (GTNLSVPNPL…PPLRDTHPQA (107 aa)) is pre-S1. A pre-S region spans residues 2–163 (GTNLSVPNPL…LSTTGDPVPN (162 aa)). Topologically, residues 2–170 (GTNLSVPNPL…VPNMENIASG (169 aa)) are virion surface; in external conformation. At 2 to 242 (GTNLSVPNPL…PGYRWMCLRR (241 aa)) the chain is on the intravirion; in internal conformation side. Residues 109 to 163 (MQWNSTTFHQTLQDPRVRALYFPAGGSSSGTVNPVQNTASSISSILSTTGDPVPN) form a pre-S2 region. The helical transmembrane segment at 171-191 (LLGPLLVLQAGFFSLTKILTI) threads the bilayer. The Intravirion; in external conformation portion of the chain corresponds to 192–242 (PLSLDSWWTSLNFLGETPVCLGQNSQSQISSHSPTCCPPICPGYRWMCLRR). The helical transmembrane segment at 243–263 (FIIFLCILLLCLIFLLVLLDY) threads the bilayer. At 264–337 (QGMLPVCPLI…WASVRFSWLS (74 aa)) the chain is on the virion surface side. N-linked (GlcNAc...) asparagine; by host glycosylation is present at Asn309. The chain crosses the membrane as a helical span at residues 338–358 (LLVPFVQWFVGLSPTVWLSVI). The Intravirion portion of the chain corresponds to 359 to 364 (WMMWFW). Residues 365 to 387 (GPSLYNILSPFMPLLPIFFCLWV) traverse the membrane as a helical segment. Residues 388 to 389 (YI) are Virion surface-facing.

Belongs to the orthohepadnavirus major surface antigen family. In terms of assembly, interacts (via its myristoylated pre-S1 region) with the host SLC10A1/NTCP; this interaction is essential for viral entry. In its internal form (Li-HBsAg), interacts with the capsid protein and with the isoform S. Interacts with host chaperone CANX. As to quaternary structure, associates with host chaperone CANX through its pre-S2 N glycan; this association may be essential for isoform M proper secretion. In terms of assembly, interacts with isoform L. Interacts with the antigens of satellite virus HDV (HDVAgs); this interaction is required for encapsidation of HDV genomic RNA. Isoform M is N-terminally acetylated by host at a ratio of 90%, and N-glycosylated by host at the pre-S2 region. Post-translationally, myristoylated; this modification is essential for its interaction with the host protein SLC10A1/NTCP.

It localises to the virion membrane. Functionally, the large envelope protein exists in two topological conformations, one which is termed 'external' or Le-HBsAg and the other 'internal' or Li-HBsAg. In its external conformation the protein attaches the virus to cell receptors and thereby initiating infection. This interaction determines the species specificity and liver tropism. This attachment induces virion internalization predominantly through caveolin-mediated endocytosis. The large envelope protein also assures fusion between virion membrane and endosomal membrane. In its internal conformation the protein plays a role in virion morphogenesis and mediates the contact with the nucleocapsid like a matrix protein. Its function is as follows. The middle envelope protein plays an important role in the budding of the virion. It is involved in the induction of budding in a nucleocapsid independent way. In this process the majority of envelope proteins bud to form subviral lipoprotein particles of 22 nm of diameter that do not contain a nucleocapsid. The chain is Large envelope protein from Hepatitis B virus genotype B2 (isolate Indonesia/pIDW420/1988) (HBV-B).